Here is a 99-residue protein sequence, read N- to C-terminus: Defensin-A4 (99 aa).

The first 21 residues, 1 to 21 (MKTLCLLFAVLCLVTWTQARG), serve as a signal peptide directing secretion. Positions 22 to 68 (AEVEENLTAQDGEVDIAGDNGDVQLTLNTDDFESFTLKTLTLGHPRV) are excised as a propeptide. Disulfide bonds link Cys73/Cys97, Cys75/Cys89, and Cys79/Cys96.

This sequence belongs to the alpha-defensin family. Lowly expressed in spleen, and expressed at lower levels in kidney and lung.

It localises to the secreted. Its function is as follows. Has antimicrobial activity. This Ornithorhynchus anatinus (Duckbill platypus) protein is Defensin-A4.